The primary structure comprises 475 residues: Bystin (475 aa).

Composition is skewed to basic residues over residues 1–12 (MGKDVKKVHKLR) and 29–41 (KPHK…RKKK). 2 disordered regions span residues 1-57 (MGKD…ESVI) and 106-149 (DFID…QFGV). Composition is skewed to acidic residues over residues 45–54 (ENDTGIDETE) and 107–119 (FIDD…DADQ).

It belongs to the bystin family.

It is found in the nucleus. The protein localises to the nucleolus. Functionally, required for processing of 20S pre-rRNA precursor and biogenesis of 40S ribosomal subunits. The protein is Bystin (bysl) of Dictyostelium discoideum (Social amoeba).